A 209-amino-acid polypeptide reads, in one-letter code: dTTP/UTP pyrophosphatase (209 aa).

The active-site Proton acceptor is D79.

Belongs to the Maf family. YhdE subfamily. A divalent metal cation serves as cofactor.

It localises to the cytoplasm. The catalysed reaction is dTTP + H2O = dTMP + diphosphate + H(+). It catalyses the reaction UTP + H2O = UMP + diphosphate + H(+). In terms of biological role, nucleoside triphosphate pyrophosphatase that hydrolyzes dTTP and UTP. May have a dual role in cell division arrest and in preventing the incorporation of modified nucleotides into cellular nucleic acids. The sequence is that of dTTP/UTP pyrophosphatase from Chelativorans sp. (strain BNC1).